Consider the following 137-residue polypeptide: Large ribosomal subunit protein uL16 (137 aa).

This sequence belongs to the universal ribosomal protein uL16 family. As to quaternary structure, part of the 50S ribosomal subunit.

Its function is as follows. Binds 23S rRNA and is also seen to make contacts with the A and possibly P site tRNAs. The polypeptide is Large ribosomal subunit protein uL16 (Methylocella silvestris (strain DSM 15510 / CIP 108128 / LMG 27833 / NCIMB 13906 / BL2)).